The following is a 350-amino-acid chain: WUSCHEL-related homeobox 1 (350 aa).

The segment at residues 72–136 (MVSSRWNPTP…NHKARERQKR (65 aa)) is a DNA-binding region (homeobox; WUS-type). The interval 283-308 (TNTETCHRNGDDNKDQEQHEDCSNGE) is disordered.

This sequence belongs to the WUS homeobox family.

It is found in the nucleus. Transcription factor which may be involved in developmental processes. This chain is WUSCHEL-related homeobox 1 (WOX1), found in Arabidopsis thaliana (Mouse-ear cress).